Here is a 167-residue protein sequence, read N- to C-terminus: Male-specific protein scotti (167 aa).

N-linked (GlcNAc...) asparagine glycosylation is found at Asn-30, Asn-124, and Asn-148.

The protein belongs to the male-specific scotti family.

Functionally, post-meiotically transcribed gene that has a role in late spermiogenesis; required for actin cone progression during spermatid individualization. The sequence is that of Male-specific protein scotti from Drosophila ananassae (Fruit fly).